A 189-amino-acid chain; its full sequence is Nucleoside triphosphate pyrophosphatase (189 aa).

Catalysis depends on Asp70, which acts as the Proton acceptor.

Belongs to the Maf family. A divalent metal cation is required as a cofactor.

The protein localises to the cytoplasm. The enzyme catalyses a ribonucleoside 5'-triphosphate + H2O = a ribonucleoside 5'-phosphate + diphosphate + H(+). It carries out the reaction a 2'-deoxyribonucleoside 5'-triphosphate + H2O = a 2'-deoxyribonucleoside 5'-phosphate + diphosphate + H(+). Nucleoside triphosphate pyrophosphatase. May have a dual role in cell division arrest and in preventing the incorporation of modified nucleotides into cellular nucleic acids. The chain is Nucleoside triphosphate pyrophosphatase from Xylella fastidiosa (strain M23).